The chain runs to 593 residues: Cytochrome c oxidase polypeptide 1 (593 aa).

2 consecutive transmembrane segments (helical) span residues A5 to L25 and I71 to L91. Residue H117 coordinates Fe(II)-heme a. 6 helical membrane passes run L122–I142, A154–P174, G204–F224, Q246–L266, L288–V308, and L320–V340. Residues H294 and Y298 each coordinate Cu cation. Residues H294–Y298 constitute a cross-link (1'-histidyl-3'-tyrosine (His-Tyr)). Positions 343 and 344 each coordinate Cu cation. A run of 5 helical transmembrane segments spans residues F358–T378, F401–H421, Y425–A445, F467–G487, and L506–A526. H429 is a heme a3 binding site. H431 is a Fe(II)-heme a binding site. The tract at residues T562–S593 is disordered.

The protein belongs to the heme-copper respiratory oxidase family.

It localises to the cell membrane. It catalyses the reaction 4 Fe(II)-[cytochrome c] + O2 + 8 H(+)(in) = 4 Fe(III)-[cytochrome c] + 2 H2O + 4 H(+)(out). It functions in the pathway energy metabolism; oxidative phosphorylation. Cytochrome c oxidase is the component of the respiratory chain that catalyzes the reduction of oxygen to water. Subunits 1-3 form the functional core of the enzyme complex. CO I is the catalytic subunit of the enzyme. Electrons originating in cytochrome c are transferred via the copper A center of subunit 2 and heme A of subunit 1 to the bimetallic center formed by heme A3 and copper B. The polypeptide is Cytochrome c oxidase polypeptide 1 (coxA2) (Halobacterium salinarum (strain ATCC 700922 / JCM 11081 / NRC-1) (Halobacterium halobium)).